We begin with the raw amino-acid sequence, 71 residues long: ATP synthase subunit c (71 aa).

2 helical membrane passes run 5-25 and 47-67; these read AIGI…AIIV and FIGA…AFLL.

This sequence belongs to the ATPase C chain family. As to quaternary structure, F-type ATPases have 2 components, F(1) - the catalytic core - and F(0) - the membrane proton channel. F(1) has five subunits: alpha(3), beta(3), gamma(1), delta(1), epsilon(1). F(0) has three main subunits: a(1), b(2) and c(10-14). The alpha and beta chains form an alternating ring which encloses part of the gamma chain. F(1) is attached to F(0) by a central stalk formed by the gamma and epsilon chains, while a peripheral stalk is formed by the delta and b chains.

The protein localises to the cell membrane. In terms of biological role, f(1)F(0) ATP synthase produces ATP from ADP in the presence of a proton or sodium gradient. F-type ATPases consist of two structural domains, F(1) containing the extramembraneous catalytic core and F(0) containing the membrane proton channel, linked together by a central stalk and a peripheral stalk. During catalysis, ATP synthesis in the catalytic domain of F(1) is coupled via a rotary mechanism of the central stalk subunits to proton translocation. Its function is as follows. Key component of the F(0) channel; it plays a direct role in translocation across the membrane. A homomeric c-ring of between 10-14 subunits forms the central stalk rotor element with the F(1) delta and epsilon subunits. The chain is ATP synthase subunit c from Shouchella clausii (strain KSM-K16) (Alkalihalobacillus clausii).